The sequence spans 62 residues: Venom peptide SjAPI-2 (62 aa).

5 disulfides stabilise this stretch: Cys-4/Cys-40, Cys-14/Cys-36, Cys-18/Cys-32, Cys-22/Cys-60, and Cys-42/Cys-54. Residues 4-60 (CRISGEVFTWCGTTCPLTCENFRNPPKHCPQGCFVGCMCRRGLVRHRNGRCVRPPRC) enclose the TIL domain.

It belongs to the serine protease inhibitor-like (TIL domain-containing) family. As to expression, expressed by the venom gland.

Its subcellular location is the secreted. Serine protease inhibitor. The polypeptide is Venom peptide SjAPI-2 (Scorpiops jendeki (Scorpion)).